We begin with the raw amino-acid sequence, 305 residues long: D-alanine--D-alanine ligase (305 aa).

One can recognise an ATP-grasp domain in the interval 99–300 (KLFFEKAGIR…YEEMIQTFVN (202 aa)). 126–181 (NFTGTYPVVVKPNQEGSTIGLTVAETEEELLQGIEEAFRHDDTILIEEFIAGTEVT) is an ATP binding site.

Belongs to the D-alanine--D-alanine ligase family.

It is found in the cytoplasm. It carries out the reaction 2 D-alanine + ATP = D-alanyl-D-alanine + ADP + phosphate + H(+). The protein operates within cell wall biogenesis; peptidoglycan biosynthesis. Its function is as follows. Cell wall formation. This Halalkalibacterium halodurans (strain ATCC BAA-125 / DSM 18197 / FERM 7344 / JCM 9153 / C-125) (Bacillus halodurans) protein is D-alanine--D-alanine ligase.